Here is a 100-residue protein sequence, read N- to C-terminus: Small ribosomal subunit protein uS14c (100 aa).

It belongs to the universal ribosomal protein uS14 family. In terms of assembly, part of the 30S ribosomal subunit.

It localises to the plastid. The protein localises to the chloroplast. Binds 16S rRNA, required for the assembly of 30S particles. This Bigelowiella natans (Pedinomonas minutissima) protein is Small ribosomal subunit protein uS14c.